A 473-amino-acid polypeptide reads, in one-letter code: Ribulose bisphosphate carboxylase large chain (473 aa).

Positions 1–2 are excised as a propeptide; sequence MS. Substrate contacts are provided by Asn-123 and Thr-173. Lys-175 serves as the catalytic Proton acceptor. Position 177 (Lys-177) interacts with substrate. Residues Lys-201, Asp-203, and Glu-204 each coordinate Mg(2+). An N6-carboxylysine modification is found at Lys-201. The residue at position 208 (Ser-208) is a Phosphoserine. The active-site Proton acceptor is His-294. 2 residues coordinate substrate: Arg-295 and His-327. Position 330 is a phosphothreonine (Thr-330). A substrate-binding site is contributed by Ser-379.

The protein belongs to the RuBisCO large chain family. Type I subfamily. As to quaternary structure, heterohexadecamer of 8 large chains and 8 small chains; disulfide-linked. The disulfide link is formed within the large subunit homodimers. Requires Mg(2+) as cofactor. Post-translationally, the disulfide bond which can form in the large chain dimeric partners within the hexadecamer appears to be associated with oxidative stress and protein turnover.

It localises to the plastid. The protein resides in the chloroplast. It catalyses the reaction 2 (2R)-3-phosphoglycerate + 2 H(+) = D-ribulose 1,5-bisphosphate + CO2 + H2O. It carries out the reaction D-ribulose 1,5-bisphosphate + O2 = 2-phosphoglycolate + (2R)-3-phosphoglycerate + 2 H(+). Its function is as follows. RuBisCO catalyzes two reactions: the carboxylation of D-ribulose 1,5-bisphosphate, the primary event in carbon dioxide fixation, as well as the oxidative fragmentation of the pentose substrate in the photorespiration process. Both reactions occur simultaneously and in competition at the same active site. In Sinapis alba (White mustard), this protein is Ribulose bisphosphate carboxylase large chain.